The primary structure comprises 415 residues: Multifunctional CCA protein (415 aa).

Positions 8 and 11 each coordinate ATP. CTP-binding residues include Gly-8 and Arg-11. Mg(2+) is bound by residues Asp-21 and Asp-23. Residues Arg-91, Arg-143, and Arg-146 each coordinate ATP. The CTP site is built by Arg-91, Arg-143, and Arg-146. Residues 232-333 (TGVHVMMVID…TRLLERCDAL (102 aa)) form the HD domain.

This sequence belongs to the tRNA nucleotidyltransferase/poly(A) polymerase family. Bacterial CCA-adding enzyme type 1 subfamily. In terms of assembly, monomer. Can also form homodimers and oligomers. It depends on Mg(2+) as a cofactor. Ni(2+) is required as a cofactor.

It carries out the reaction a tRNA precursor + 2 CTP + ATP = a tRNA with a 3' CCA end + 3 diphosphate. The enzyme catalyses a tRNA with a 3' CCA end + 2 CTP + ATP = a tRNA with a 3' CCACCA end + 3 diphosphate. Functionally, catalyzes the addition and repair of the essential 3'-terminal CCA sequence in tRNAs without using a nucleic acid template. Adds these three nucleotides in the order of C, C, and A to the tRNA nucleotide-73, using CTP and ATP as substrates and producing inorganic pyrophosphate. tRNA 3'-terminal CCA addition is required both for tRNA processing and repair. Also involved in tRNA surveillance by mediating tandem CCA addition to generate a CCACCA at the 3' terminus of unstable tRNAs. While stable tRNAs receive only 3'-terminal CCA, unstable tRNAs are marked with CCACCA and rapidly degraded. This is Multifunctional CCA protein from Cupriavidus pinatubonensis (strain JMP 134 / LMG 1197) (Cupriavidus necator (strain JMP 134)).